The sequence spans 257 residues: Tryptophan synthase alpha chain (257 aa).

Residues Glu-46 and Asp-57 each act as proton acceptor in the active site.

This sequence belongs to the TrpA family. As to quaternary structure, tetramer of two alpha and two beta chains.

It catalyses the reaction (1S,2R)-1-C-(indol-3-yl)glycerol 3-phosphate + L-serine = D-glyceraldehyde 3-phosphate + L-tryptophan + H2O. It participates in amino-acid biosynthesis; L-tryptophan biosynthesis; L-tryptophan from chorismate: step 5/5. Its function is as follows. The alpha subunit is responsible for the aldol cleavage of indoleglycerol phosphate to indole and glyceraldehyde 3-phosphate. The protein is Tryptophan synthase alpha chain of Parabacteroides distasonis (strain ATCC 8503 / DSM 20701 / CIP 104284 / JCM 5825 / NCTC 11152).